A 334-amino-acid polypeptide reads, in one-letter code: Fe-S cluster assembly protein DRE2 (334 aa).

An N-terminal SAM-like domain region spans residues 1 to 131 (MASTKTGLVL…ASIKAEPVAV (131 aa)). Residues 132 to 228 (PLRNHKKTTT…EDELVDENEM (97 aa)) form a linker region. The segment at 135–229 (NHKKTTTPGT…DELVDENEMR (95 aa)) is disordered. The segment covering 140 to 150 (TTPGTTTTAKK) has biased composition (low complexity). Composition is skewed to acidic residues over residues 182–192 (DSEDEDEESEG) and 215–227 (DSIEEDELVDENE). Positions 238, 249, 252, and 254 each coordinate [2Fe-2S] cluster. The fe-S binding site A stretch occupies residues 238–254 (CGKSKTRRRKACKDCTC). [4Fe-4S] cluster-binding residues include C297, C300, C308, and C311. 2 consecutive short sequence motifs (cx2C motif) follow at residues 297 to 300 (CGSC) and 308 to 311 (CSGC). The tract at residues 297–311 (CGSCTLGDAFRCSGC) is fe-S binding site B.

It belongs to the anamorsin family. Monomer. Interacts with TAH18. Interacts with MIA40. It depends on [2Fe-2S] cluster as a cofactor. The cofactor is [4Fe-4S] cluster.

The protein resides in the cytoplasm. Its subcellular location is the mitochondrion intermembrane space. Component of the cytosolic iron-sulfur (Fe-S) protein assembly (CIA) machinery required for the maturation of extramitochondrial Fe-S proteins. Part of an electron transfer chain functioning in an early step of cytosolic Fe-S biogenesis, facilitating the de novo assembly of a [4Fe-4S] cluster on the scaffold complex CFD1-NBP35. Electrons are transferred to DRE2 from NADPH via the FAD- and FMN-containing protein TAH18. TAH18-DRE2 are also required for the assembly of the diferric tyrosyl radical cofactor of ribonucleotide reductase (RNR), probably by providing electrons for reduction during radical cofactor maturation in the catalytic small subunit RNR2. The chain is Fe-S cluster assembly protein DRE2 from Zygosaccharomyces rouxii (strain ATCC 2623 / CBS 732 / NBRC 1130 / NCYC 568 / NRRL Y-229).